The primary structure comprises 285 residues: uncharacterized protein (285 aa).

Residues 107–285 (FLTVDTTIFD…KHHLKRQMIP (179 aa)) enclose the ATP-grasp domain.

This is an uncharacterized protein from Mycoplasma pneumoniae (strain ATCC 29342 / M129 / Subtype 1) (Mycoplasmoides pneumoniae).